The primary structure comprises 305 residues: LysM and putative peptidoglycan-binding domain-containing protein 3 (305 aa).

The Extracellular portion of the chain corresponds to 1–221 (MTGRNQHNGF…PYYGADWGMR (221 aa)). N29 is a glycosylation site (N-linked (GlcNAc...) asparagine). The tract at residues 31–60 (SETEYSEEDGEAFELRSRGRERHHRSTSRD) is disordered. In terms of domain architecture, LysM spans 68 to 112 (LIREIKEGDTLISISLQYFCTVADIKRANNLLTEQDFFALRSLRI). The segment covering 121-144 (TETHNTAPHKSSSPSGTCRITETP) has biased composition (polar residues). The interval 121-156 (TETHNTAPHKSSSPSGTCRITETPVSGASLDSTSSS) is disordered. The segment covering 146 to 156 (SGASLDSTSSS) has biased composition (low complexity). A helical membrane pass occupies residues 222-242 (WWTAVAIMLVVGIVTPVFYLL). Topologically, residues 243–305 (YYEVLMKADV…QHHVKHQEET (63 aa)) are cytoplasmic.

The protein localises to the cell membrane. Its subcellular location is the golgi apparatus. Essential for Golgi structural integrity. This is LysM and putative peptidoglycan-binding domain-containing protein 3 (lysmd3) from Danio rerio (Zebrafish).